The sequence spans 357 residues: Norreticuline-7-O-methyltransferase (357 aa).

D225 contacts S-adenosyl-L-methionine. H263 functions as the Proton acceptor in the catalytic mechanism.

This sequence belongs to the class I-like SAM-binding methyltransferase superfamily. Cation-independent O-methyltransferase family. Expressed instems, leaves, roots and seedlings.

Functionally, involved in the biosynthesis of benzylisoquinoline alkaloids. Catalyzes specifically the methylation of norreticuline at position seven to produce norlaudanine. No activity with norcoclaurine, reticuline, norlaudanosoline, norisoorientaline, scoulerine, salutaridinol, oripavine, salsolinol, codeine or morphine. Involved in papaverine biosynthesis. The polypeptide is Norreticuline-7-O-methyltransferase (Papaver somniferum (Opium poppy)).